The chain runs to 403 residues: S-adenosylmethionine synthase (403 aa).

ATP is bound at residue H15. D17 provides a ligand contact to Mg(2+). Position 43 (E43) interacts with K(+). E56 and Q99 together coordinate L-methionine. Residues 99–109 (QSPHIAQGVDR) form a flexible loop region. ATP-binding positions include 166–168 (DAK), 232–233 (KF), D241, 247–248 (RK), A264, and K268. An L-methionine-binding site is contributed by D241. Residue K272 participates in L-methionine binding.

This sequence belongs to the AdoMet synthase family. In terms of assembly, homotetramer; dimer of dimers. Requires Mg(2+) as cofactor. It depends on K(+) as a cofactor.

The protein localises to the cytoplasm. The catalysed reaction is L-methionine + ATP + H2O = S-adenosyl-L-methionine + phosphate + diphosphate. It participates in amino-acid biosynthesis; S-adenosyl-L-methionine biosynthesis; S-adenosyl-L-methionine from L-methionine: step 1/1. Its function is as follows. Catalyzes the formation of S-adenosylmethionine (AdoMet) from methionine and ATP. The overall synthetic reaction is composed of two sequential steps, AdoMet formation and the subsequent tripolyphosphate hydrolysis which occurs prior to release of AdoMet from the enzyme. The chain is S-adenosylmethionine synthase from Stenotrophomonas maltophilia (strain K279a).